The primary structure comprises 457 residues: Serine/threonine-protein phosphatase 2A activator 2 (457 aa).

2 disordered regions span residues 387–407 and 426–457; these read DAHG…GEGQ and AEQE…IPFD. A compositionally biased stretch (basic residues) spans 391–400; it reads HIHPAGKPHA.

Belongs to the PTPA-type PPIase family.

The protein localises to the cytoplasm. The catalysed reaction is [protein]-peptidylproline (omega=180) = [protein]-peptidylproline (omega=0). Its function is as follows. PPIases accelerate the folding of proteins. It catalyzes the cis-trans isomerization of proline imidic peptide bonds in oligopeptides. Acts as a regulatory subunit for PP2A-like phosphatases modulating their activity or substrate specificity, probably by inducing a conformational change in the catalytic subunit, a direct target of the PPIase. Can reactivate inactive phosphatase PP2A-phosphatase methylesterase complexes (PP2Ai) in presence of ATP and Mg(2+) by dissociating the inactive form from the complex. This Mycosarcoma maydis (Corn smut fungus) protein is Serine/threonine-protein phosphatase 2A activator 2 (RRD2).